We begin with the raw amino-acid sequence, 74 residues long: Imcroporin (74 aa).

The N-terminal stretch at 1 to 22 (MKFQYLLAVFLIVLVVTDHCQA) is a signal peptide. At lysine 39 the chain carries Lysine amide; partial. A propeptide spanning residues 45–74 (QLEARFEPKQRNFRKRELDFEKLFANMPDY) is cleaved from the precursor.

This sequence belongs to the non-disulfide-bridged peptide (NDBP) superfamily. Short antimicrobial peptide (group 4) family. As to expression, expressed by the venom gland.

It localises to the secreted. The protein resides in the target cell membrane. Has potent antibacterial activity against Gram-positive bacteria M.luteus, B.thuringiensis, S.aureus and B.subtilis, but not Gram-negative bacteria. Shows a weak cytotoxicity effect against mammalian cell lines and relatively low hemolytic activity against human erythrocytes. The polypeptide is Imcroporin (Isometrus maculatus (Lesser brown scorpion)).